The following is a 357-amino-acid chain: DNA replication and repair protein RecF (357 aa).

Position 30 to 37 (30 to 37 (GANGSGKT)) interacts with ATP.

This sequence belongs to the RecF family.

The protein resides in the cytoplasm. In terms of biological role, the RecF protein is involved in DNA metabolism; it is required for DNA replication and normal SOS inducibility. RecF binds preferentially to single-stranded, linear DNA. It also seems to bind ATP. This Citrobacter koseri (strain ATCC BAA-895 / CDC 4225-83 / SGSC4696) protein is DNA replication and repair protein RecF.